The primary structure comprises 362 residues: Protein OCA4 (362 aa).

Functionally, required for replication of Brome mosaic virus (BMV). In Saccharomyces cerevisiae (strain ATCC 204508 / S288c) (Baker's yeast), this protein is Protein OCA4 (OCA4).